Consider the following 82-residue polypeptide: Modifier of protein aggregation 4 (82 aa).

The span at M1–K23 shows a compositional bias: basic and acidic residues. Disordered stretches follow at residues M1–R41 and E63–M82.

Belongs to the SERF family.

Its subcellular location is the cytoplasm. The protein localises to the cytosol. It localises to the nucleus. Functionally, positive regulator of protein aggregation and age-related proteotoxicity. Induces conformational changes in aggregation-prone proteins, driving them into compact formations preceding the formation of aggregates. The sequence is that of Modifier of protein aggregation 4 from Caenorhabditis elegans.